We begin with the raw amino-acid sequence, 453 residues long: Flavonol-3-O-rhamnosyltransferase (453 aa).

Residue H24 is the Proton acceptor of the active site. H24 is a binding site for an anthocyanidin. Catalysis depends on D119, which acts as the Charge relay. H150 is a binding site for an anthocyanidin. The UDP-beta-L-rhamnose site is built by T280, A333, H350, N354, S355, and E358. Position 373 (A373) interacts with an anthocyanidin.

It belongs to the UDP-glycosyltransferase family. Expressed in leaves, flowers, siliques, and stems. Expressed in the shoot apex.

The enzyme catalyses kaempferol + UDP-beta-L-rhamnose = kaempferol 3-O-alpha-L-rhamnoside + UDP + H(+). The catalysed reaction is UDP-beta-L-rhamnose + quercetin = quercitrin + UDP + H(+). The protein operates within flavonoid metabolism. Its function is as follows. Flavonol 3-O-rhamnosyltransferase that catalyzes the transfer of rhamnose from UDP-rhamnose to the 3-OH position of kaempferol and quercetin. Possesses low quercetin 3-O-glucosyltransferase activity in vitro. In Arabidopsis thaliana (Mouse-ear cress), this protein is Flavonol-3-O-rhamnosyltransferase.